A 370-amino-acid polypeptide reads, in one-letter code: Small ribosomal subunit biogenesis GTPase RsgA (370 aa).

Residues 97 to 255 enclose the CP-type G domain; it reads QTQLDRPPIA…LADTPGFNQP (159 aa). Residues 146-149 and 197-205 contribute to the GTP site; these read NKSD and GPSGVGKSS. Positions 280, 285, 287, and 293 each coordinate Zn(2+). The tract at residues 328-370 is disordered; the sequence is TLKLKTKGKGQSQYEPKLESKKYRRTSRRTQVQGLQDLYQEEE.

The protein belongs to the TRAFAC class YlqF/YawG GTPase family. RsgA subfamily. As to quaternary structure, monomer. Associates with 30S ribosomal subunit, binds 16S rRNA. The cofactor is Zn(2+).

It is found in the cytoplasm. Functionally, one of several proteins that assist in the late maturation steps of the functional core of the 30S ribosomal subunit. Helps release RbfA from mature subunits. May play a role in the assembly of ribosomal proteins into the subunit. Circularly permuted GTPase that catalyzes slow GTP hydrolysis, GTPase activity is stimulated by the 30S ribosomal subunit. In Trichormus variabilis (strain ATCC 29413 / PCC 7937) (Anabaena variabilis), this protein is Small ribosomal subunit biogenesis GTPase RsgA.